The chain runs to 598 residues: UvrABC system protein C (598 aa).

The 78-residue stretch at 14-91 folds into the GIY-YIG domain; that stretch reads DSPGCYLHKD…IQKNMPKYNI (78 aa). Positions 196–231 constitute a UVR domain; it reads DKIIEDLRSKMLAASEEMAFERAAEYRDLISGIATM.

This sequence belongs to the UvrC family. Interacts with UvrB in an incision complex.

The protein localises to the cytoplasm. In terms of biological role, the UvrABC repair system catalyzes the recognition and processing of DNA lesions. UvrC both incises the 5' and 3' sides of the lesion. The N-terminal half is responsible for the 3' incision and the C-terminal half is responsible for the 5' incision. This chain is UvrABC system protein C, found in Streptococcus pyogenes serotype M3 (strain ATCC BAA-595 / MGAS315).